An 83-amino-acid polypeptide reads, in one-letter code: MTEVRKYLVRKVPTNKSIQTRQMPDSDYSSPAFYLSEGYPCKEWLRDRFYTVLVIELRGLNYQRTHLSKFAKECLLTSNQRCI.

This is an uncharacterized protein from Dictyostelium discoideum (Social amoeba).